Here is a 467-residue protein sequence, read N- to C-terminus: tRNA-2-methylthio-N(6)-dimethylallyladenosine synthase (467 aa).

In terms of domain architecture, MTTase N-terminal spans 22–138; it reads GSYWITTFGC…LETLLNKVET (117 aa). Cys31, Cys67, Cys101, Cys173, Cys177, and Cys180 together coordinate [4Fe-4S] cluster. The region spanning 159–396 is the Radical SAM core domain; sequence RDSSICAWVN…NSLVEIKAKE (238 aa). One can recognise a TRAM domain in the interval 399–467; that stretch reads VRYKDRVEEV…AFSLSGVIEN (69 aa).

The protein belongs to the methylthiotransferase family. MiaB subfamily. Monomer. The cofactor is [4Fe-4S] cluster.

It is found in the cytoplasm. It carries out the reaction N(6)-dimethylallyladenosine(37) in tRNA + (sulfur carrier)-SH + AH2 + 2 S-adenosyl-L-methionine = 2-methylsulfanyl-N(6)-dimethylallyladenosine(37) in tRNA + (sulfur carrier)-H + 5'-deoxyadenosine + L-methionine + A + S-adenosyl-L-homocysteine + 2 H(+). Catalyzes the methylthiolation of N6-(dimethylallyl)adenosine (i(6)A), leading to the formation of 2-methylthio-N6-(dimethylallyl)adenosine (ms(2)i(6)A) at position 37 in tRNAs that read codons beginning with uridine. The protein is tRNA-2-methylthio-N(6)-dimethylallyladenosine synthase of Prochlorococcus marinus (strain MIT 9211).